The primary structure comprises 293 residues: Elongation factor Ts (293 aa).

The interval 80 to 83 (TDFV) is involved in Mg(2+) ion dislocation from EF-Tu.

The protein belongs to the EF-Ts family.

Its subcellular location is the cytoplasm. Associates with the EF-Tu.GDP complex and induces the exchange of GDP to GTP. It remains bound to the aminoacyl-tRNA.EF-Tu.GTP complex up to the GTP hydrolysis stage on the ribosome. This Staphylococcus aureus (strain Mu3 / ATCC 700698) protein is Elongation factor Ts.